A 174-amino-acid chain; its full sequence is Crossover junction endodeoxyribonuclease RuvC (174 aa).

Catalysis depends on residues Asp-8, Glu-69, and Asp-141. Residues Asp-8, Glu-69, and Asp-141 each contribute to the Mg(2+) site.

It belongs to the RuvC family. Homodimer which binds Holliday junction (HJ) DNA. The HJ becomes 2-fold symmetrical on binding to RuvC with unstacked arms; it has a different conformation from HJ DNA in complex with RuvA. In the full resolvosome a probable DNA-RuvA(4)-RuvB(12)-RuvC(2) complex forms which resolves the HJ. Mg(2+) serves as cofactor.

It is found in the cytoplasm. The enzyme catalyses Endonucleolytic cleavage at a junction such as a reciprocal single-stranded crossover between two homologous DNA duplexes (Holliday junction).. In terms of biological role, the RuvA-RuvB-RuvC complex processes Holliday junction (HJ) DNA during genetic recombination and DNA repair. Endonuclease that resolves HJ intermediates. Cleaves cruciform DNA by making single-stranded nicks across the HJ at symmetrical positions within the homologous arms, yielding a 5'-phosphate and a 3'-hydroxyl group; requires a central core of homology in the junction. The consensus cleavage sequence is 5'-(A/T)TT(C/G)-3'. Cleavage occurs on the 3'-side of the TT dinucleotide at the point of strand exchange. HJ branch migration catalyzed by RuvA-RuvB allows RuvC to scan DNA until it finds its consensus sequence, where it cleaves and resolves the cruciform DNA. In Xanthomonas oryzae pv. oryzae (strain MAFF 311018), this protein is Crossover junction endodeoxyribonuclease RuvC.